The chain runs to 360 residues: Inward rectifier potassium channel 13 (360 aa).

The Cytoplasmic portion of the chain corresponds to 1-50 (MDSSNCKVNAPLLSQRHRRMVTKDGHSTLQMDGAQRGLVYLRDAWGILMD). Residues 51-77 (MRWRWMMLVFSASFVVHWLVFAVLWYA) form a helical membrane-spanning segment. The Extracellular portion of the chain corresponds to 78 to 105 (VAEMNGDLEIDHDVPPENHTICVKHITS). An intramembrane region (helical; Pore-forming) is located at residues 106 to 122 (FTAAFSFSLETQLTIGY). The short motif at 119–124 (TIGYGT) is the Selectivity filter element. Topologically, residues 123 to 131 (GTMFPSGDC) are extracellular. A helical transmembrane segment spans residues 132 to 157 (PSAIALLAIQMLLGLMLEAFITGAFV). The Cytoplasmic portion of the chain corresponds to 158–360 (AKIARPKNRA…FQIAETGLTE (203 aa)). Phosphoserine; by PKA is present on serine 287.

The protein belongs to the inward rectifier-type potassium channel (TC 1.A.2.1) family. KCNJ13 subfamily. As to quaternary structure, homotetramer. Interacts with RAB28; the interaction may facilitate cone outer segments phagocytosis. In terms of processing, phosphorylation at Ser-287 by PKA increases ionic currents. Expressed in retina.

Its subcellular location is the membrane. It is found in the cell membrane. The enzyme catalyses K(+)(in) = K(+)(out). Inhibited by Ba(2+) and Cs(+), although sensitivity to those inhibitors is much lower than in other Kir channels. In terms of biological role, inward rectifier potassium channels are characterized by a greater tendency to allow potassium to flow into the cell rather than out of it. Their voltage dependence is regulated by the concentration of extracellular potassium; as external potassium is raised, the voltage range of the channel opening shifts to more positive voltages. The inward rectification is mainly due to the blockage of outward current by internal magnesium. KCNJ13 has a very low single channel conductance, low sensitivity to block by external barium and cesium, and no dependence of its inward rectification properties on the internal blocking particle magnesium. This chain is Inward rectifier potassium channel 13, found in Mus musculus (Mouse).